The primary structure comprises 185 residues: MISAGDFKNGVTFELDGQIFQVIEFQHVKPGKGAAFVRTKLKNIVTGATIEKTFNPTDKMPKAHIERKDMQYLYNDGDLYYFMDTETFEQLPLGKDKIGDALKFVKENEIVKVLSHKGNVFGIEPPNFVELEVTDTEPGFKGDTATGATKPAIVETGASIKVPLFVNKGDIIRIDTRTGEYMERV.

This sequence belongs to the elongation factor P family.

It is found in the cytoplasm. It participates in protein biosynthesis; polypeptide chain elongation. Functionally, involved in peptide bond synthesis. Stimulates efficient translation and peptide-bond synthesis on native or reconstituted 70S ribosomes in vitro. Probably functions indirectly by altering the affinity of the ribosome for aminoacyl-tRNA, thus increasing their reactivity as acceptors for peptidyl transferase. The chain is Elongation factor P from Acetivibrio thermocellus (strain ATCC 27405 / DSM 1237 / JCM 9322 / NBRC 103400 / NCIMB 10682 / NRRL B-4536 / VPI 7372) (Clostridium thermocellum).